The chain runs to 317 residues: Pantothenate kinase (317 aa).

Gly99–Ser106 contributes to the ATP binding site.

The protein belongs to the prokaryotic pantothenate kinase family.

It localises to the cytoplasm. The enzyme catalyses (R)-pantothenate + ATP = (R)-4'-phosphopantothenate + ADP + H(+). It participates in cofactor biosynthesis; coenzyme A biosynthesis; CoA from (R)-pantothenate: step 1/5. This is Pantothenate kinase from Histophilus somni (strain 2336) (Haemophilus somnus).